Consider the following 852-residue polypeptide: Cytochrome P450 monooxygenase mpaDE (852 aa).

Residues 1–6 are Lumenal-facing; sequence MDYLII. The chain crosses the membrane as a helical span at residues 7–29; the sequence is IRITAVAVVLYLTRYVCCLYLHL. Over 30–852 the chain is Cytoplasmic; sequence QDVPGPLFAK…DLEDAMEGTK (823 aa). Cys-448 provides a ligand contact to heme.

This sequence belongs to the cytochrome P450 family. The cofactor is heme.

It is found in the endoplasmic reticulum membrane. It catalyses the reaction 5-methylorsellinate + reduced [NADPH--hemoprotein reductase] + O2 = 4,6-dihydroxy-2-(hydroxymethyl)-3-methylbenzoate + oxidized [NADPH--hemoprotein reductase] + H2O + H(+). It carries out the reaction 4,6-dihydroxy-2-(hydroxymethyl)-3-methylbenzoate + H(+) = 5,7-dihydroxy-4-methylphthalide + H2O. The protein operates within secondary metabolite biosynthesis; terpenoid biosynthesis. Its function is as follows. Cytochrome P450 monooxygenase; part of the gene cluster that mediates the biosynthesis of mycophenolic acid (MPA), the first isolated antibiotic natural product in the world obtained from a culture of Penicillium brevicompactum in 1893. MpaDE is an endoplasmic reticulum-bound enzyme that catalyzes the conversion of 5-methylorsellinic acid (5MOA) into the phthalide compound 5,7-dihydroxy-4,6-dimethylphthalide (DHMP). MpaDE first catalyzes hydroxylation of 5-MOA to 4,6-dihydroxy-2-(hydroxymethyl)-3-methylbenzoic acid (DHMB), and then acts as a lactone synthase that catalyzes the ring closure to convert DHMB into DHMP. The first step of the pathway is the synthesis of 5-methylorsellinic acid (5MOA) by the cytosolic polyketide synthase mpaC. 5MOA is then converted to the phthalide compound 5,7-dihydroxy-4,6-dimethylphthalide (DHMP) by the endoplasmic reticulum-bound cytochrome P450 monooxygenase mpaDE. MpaDE first catalyzes hydroxylation of 5-MOA to 4,6-dihydroxy-2-(hydroxymethyl)-3-methylbenzoic acid (DHMB). MpaDE then acts as a lactone synthase that catalyzes the ring closure to convert DHMB into DHMP. The next step is the prenylation of DHMP by the Golgi apparatus-associated prenyltransferase mpaA to yield farnesyl-DHMP (FDHMP). The ER-bound oxygenase mpaB then mediates the oxidative cleavage the C19-C20 double bond in FDHMP to yield FDHMP-3C via a mycophenolic aldehyde intermediate. The O-methyltransferase mpaG catalyzes the methylation of FDHMP-3C to yield MFDHMP-3C. After the cytosolic methylation of FDHMP-3C, MFDHMP-3C enters into peroxisomes probably via free diffusion due to its low molecular weight. Upon a peroxisomal CoA ligation reaction, catalyzed by a beta-oxidation component enzyme acyl-CoA ligase ACL891, MFDHMP-3C-CoA would then be restricted to peroxisomes for the following beta-oxidation pathway steps. The peroxisomal beta-oxidation machinery than converts MFDHMP-3C-CoA into MPA_CoA, via a beta-oxidation chain-shortening process. Finally mpaH acts as a peroxisomal acyl-CoA hydrolase with high substrate specificity toward MPA-CoA to release the final product MPA. The chain is Cytochrome P450 monooxygenase mpaDE from Penicillium roqueforti (strain FM164).